We begin with the raw amino-acid sequence, 201 residues long: Imidazole glycerol phosphate synthase subunit HisH (201 aa).

Residues 2–201 (KVVILDTGCA…ARLLKNFLEM (200 aa)) form the Glutamine amidotransferase type-1 domain. The Nucleophile role is filled by C77. Residues H183 and E185 contribute to the active site.

In terms of assembly, heterodimer of HisH and HisF.

The protein localises to the cytoplasm. The enzyme catalyses 5-[(5-phospho-1-deoxy-D-ribulos-1-ylimino)methylamino]-1-(5-phospho-beta-D-ribosyl)imidazole-4-carboxamide + L-glutamine = D-erythro-1-(imidazol-4-yl)glycerol 3-phosphate + 5-amino-1-(5-phospho-beta-D-ribosyl)imidazole-4-carboxamide + L-glutamate + H(+). It catalyses the reaction L-glutamine + H2O = L-glutamate + NH4(+). The protein operates within amino-acid biosynthesis; L-histidine biosynthesis; L-histidine from 5-phospho-alpha-D-ribose 1-diphosphate: step 5/9. IGPS catalyzes the conversion of PRFAR and glutamine to IGP, AICAR and glutamate. The HisH subunit catalyzes the hydrolysis of glutamine to glutamate and ammonia as part of the synthesis of IGP and AICAR. The resulting ammonia molecule is channeled to the active site of HisF. This chain is Imidazole glycerol phosphate synthase subunit HisH, found in Photorhabdus laumondii subsp. laumondii (strain DSM 15139 / CIP 105565 / TT01) (Photorhabdus luminescens subsp. laumondii).